The following is a 342-amino-acid chain: MSDEDDLEDFETDQDDLEREDDEKETEEWEDYRKEGEESEDWISTPLTEDMMKEGLSLLCKTGNGLAHAYVKLEIKDRDLTDIHLLRSYIHLRYVDVSENHLTDLSPLNHLTNLLWLKADGNQLRSARLNELPYLQIASFAYNQITDTEGISHPRLASLDLKGNRIHMVTGLDPQKLISLHTLELRGNQLNSTLGINLPKLKNLFLAQNMLKKVEGLENLSNLTTLHLRDNQIETLSGFSKEMKSLQYLNLRGNMVADLGELAKLRDLPRLRALVLLDNPCTDENDYRQEALVQIAHLERLDKEFYEEEERAEADEIRQRMKEEQEQEAEVEPESELDQSST.

Residues 1 to 30 (MSDEDDLEDFETDQDDLEREDDEKETEEWE) are compositionally biased toward acidic residues. The disordered stretch occupies residues 1 to 42 (MSDEDDLEDFETDQDDLEREDDEKETEEWEDYRKEGEESEDW). Residues 3–27 (DEDDLEDFETDQDDLEREDDEKETE) adopt a coiled-coil conformation. LRR repeat units follow at residues 91–112 (HLRY…NHLT), 113–133 (NLLW…NELP), 134–154 (YLQI…ISHP), 155–176 (RLAS…DPQK), 179–199 (SLHT…INLP), 200–221 (KLKN…ENLS), 222–243 (NLTT…SKEM), and 245–266 (SLQY…AKLR). The interaction with RSPH9 stretch occupies residues 207 to 342 (AQNMLKKVEG…PESELDQSST (136 aa)). The region spanning 279–317 (NPCTDENDYRQEALVQIAHLERLDKEFYEEEERAEADEI) is the LRRCT domain. Residues 306-332 (YEEEERAEADEIRQRMKEEQEQEAEVE) adopt a coiled-coil conformation. Residues 307–342 (EEEERAEADEIRQRMKEEQEQEAEVEPESELDQSST) form a disordered region. Basic and acidic residues predominate over residues 314-324 (ADEIRQRMKEE). The segment covering 325-342 (QEQEAEVEPESELDQSST) has biased composition (acidic residues).

As to quaternary structure, component of the axonemal radial spoke complex. Interacts with RSPH3. Interacts with RSPH9.

It is found in the cytoplasm. The protein localises to the cytoskeleton. Its subcellular location is the flagellum axoneme. Its function is as follows. Essential for sperm motility and male fertility. Plays an important role in the proper assembly of the third radial spoke (RS3) head and the bridge structure between RS2 and RS3 in the sperm flagella. The polypeptide is Leucine-rich repeat-containing protein 23 (LRRC23) (Bos taurus (Bovine)).